The sequence spans 379 residues: Cobalt-precorrin-5B C(1)-methyltransferase (379 aa).

It belongs to the CbiD family.

The catalysed reaction is Co-precorrin-5B + S-adenosyl-L-methionine = Co-precorrin-6A + S-adenosyl-L-homocysteine. Its pathway is cofactor biosynthesis; adenosylcobalamin biosynthesis; cob(II)yrinate a,c-diamide from sirohydrochlorin (anaerobic route): step 6/10. Catalyzes the methylation of C-1 in cobalt-precorrin-5B to form cobalt-precorrin-6A. The protein is Cobalt-precorrin-5B C(1)-methyltransferase of Klebsiella pneumoniae subsp. pneumoniae (strain ATCC 700721 / MGH 78578).